Consider the following 114-residue polypeptide: Large ribosomal subunit protein P2 (114 aa).

The tract at residues 84–114 is disordered; it reads TDALQAGSKKGETKEGPKEESDEDMGFGLFD. Residues 92-102 are compositionally biased toward basic and acidic residues; sequence KKGETKEGPKE.

The protein belongs to the eukaryotic ribosomal protein P1/P2 family. P1 and P2 exist as dimers at the large ribosomal subunit. Phosphorylated.

Plays an important role in the elongation step of protein synthesis. The chain is Large ribosomal subunit protein P2 (rpp-2) from Brugia malayi (Filarial nematode worm).